The following is a 1254-amino-acid chain: DNA-directed RNA polymerase subunit beta' (1254 aa).

Zn(2+) is bound by residues Cys59, Cys61, Cys76, and Cys79. Residues Asp501, Asp503, and Asp505 each contribute to the Mg(2+) site. The Zn(2+) site is built by Cys871, Cys946, Cys953, and Cys956.

The protein belongs to the RNA polymerase beta' chain family. In terms of assembly, the RNAP catalytic core consists of 2 alpha, 1 beta, 1 beta' and 1 omega subunit. When a sigma factor is associated with the core the holoenzyme is formed, which can initiate transcription. Requires Mg(2+) as cofactor. Zn(2+) is required as a cofactor.

The enzyme catalyses RNA(n) + a ribonucleoside 5'-triphosphate = RNA(n+1) + diphosphate. DNA-dependent RNA polymerase catalyzes the transcription of DNA into RNA using the four ribonucleoside triphosphates as substrates. The chain is DNA-directed RNA polymerase subunit beta' from Mesoplasma florum (strain ATCC 33453 / NBRC 100688 / NCTC 11704 / L1) (Acholeplasma florum).